Consider the following 314-residue polypeptide: tRNA pseudouridine synthase B (314 aa).

Substrate is bound at residue H43. D48 acts as the Nucleophile in catalysis. The substrate site is built by Y76, Y179, and L200.

This sequence belongs to the pseudouridine synthase TruB family. Type 1 subfamily.

The enzyme catalyses uridine(55) in tRNA = pseudouridine(55) in tRNA. In terms of biological role, responsible for synthesis of pseudouridine from uracil-55 in the psi GC loop of transfer RNAs. The chain is tRNA pseudouridine synthase B from Salmonella paratyphi A (strain ATCC 9150 / SARB42).